The following is a 270-amino-acid chain: Shikimate dehydrogenase (NADP(+)) (270 aa).

Residues 14-16 and T61 contribute to the shikimate site; that span reads SKS. The active-site Proton acceptor is K65. Shikimate-binding residues include N86 and D101. NADP(+) is bound by residues 126–130, 150–155, and M215; these read GAGGA and NRTVDK. Y217 lines the shikimate pocket. An NADP(+)-binding site is contributed by G238.

This sequence belongs to the shikimate dehydrogenase family. As to quaternary structure, homodimer.

The catalysed reaction is shikimate + NADP(+) = 3-dehydroshikimate + NADPH + H(+). It functions in the pathway metabolic intermediate biosynthesis; chorismate biosynthesis; chorismate from D-erythrose 4-phosphate and phosphoenolpyruvate: step 4/7. Its function is as follows. Involved in the biosynthesis of the chorismate, which leads to the biosynthesis of aromatic amino acids. Catalyzes the reversible NADPH linked reduction of 3-dehydroshikimate (DHSA) to yield shikimate (SA). The polypeptide is Shikimate dehydrogenase (NADP(+)) (Methylobacillus flagellatus (strain ATCC 51484 / DSM 6875 / VKM B-1610 / KT)).